Here is a 404-residue protein sequence, read N- to C-terminus: Probable tRNA sulfurtransferase (404 aa).

Residues 60–165 (TAVAESLKQV…EEAAYLSYET (106 aa)) enclose the THUMP domain. ATP is bound by residues 183-184 (ML), 208-209 (HF), Arg-265, Gly-287, and Gln-296.

This sequence belongs to the ThiI family.

The protein resides in the cytoplasm. It carries out the reaction [ThiI sulfur-carrier protein]-S-sulfanyl-L-cysteine + a uridine in tRNA + 2 reduced [2Fe-2S]-[ferredoxin] + ATP + H(+) = [ThiI sulfur-carrier protein]-L-cysteine + a 4-thiouridine in tRNA + 2 oxidized [2Fe-2S]-[ferredoxin] + AMP + diphosphate. The enzyme catalyses [ThiS sulfur-carrier protein]-C-terminal Gly-Gly-AMP + S-sulfanyl-L-cysteinyl-[cysteine desulfurase] + AH2 = [ThiS sulfur-carrier protein]-C-terminal-Gly-aminoethanethioate + L-cysteinyl-[cysteine desulfurase] + A + AMP + 2 H(+). It participates in cofactor biosynthesis; thiamine diphosphate biosynthesis. Its function is as follows. Catalyzes the ATP-dependent transfer of a sulfur to tRNA to produce 4-thiouridine in position 8 of tRNAs, which functions as a near-UV photosensor. Also catalyzes the transfer of sulfur to the sulfur carrier protein ThiS, forming ThiS-thiocarboxylate. This is a step in the synthesis of thiazole, in the thiamine biosynthesis pathway. The sulfur is donated as persulfide by IscS. This Streptococcus pneumoniae serotype 2 (strain D39 / NCTC 7466) protein is Probable tRNA sulfurtransferase.